Here is a 163-residue protein sequence, read N- to C-terminus: Nucleotide-binding protein Noca_0564 (163 aa).

Belongs to the YajQ family.

Its function is as follows. Nucleotide-binding protein. This chain is Nucleotide-binding protein Noca_0564, found in Nocardioides sp. (strain ATCC BAA-499 / JS614).